The primary structure comprises 136 residues: uncharacterized protein (136 aa).

This is an uncharacterized protein from Pasteurella multocida (strain Pm70).